The primary structure comprises 620 residues: Chaperone protein DnaK (620 aa).

At T197 the chain carries Phosphothreonine; by autocatalysis. The disordered stretch occupies residues 597–620 (AMANKNNAEQPKKKDDDVIDAEVE).

Belongs to the heat shock protein 70 family.

Its function is as follows. Acts as a chaperone. In Helicobacter pylori (strain Shi470), this protein is Chaperone protein DnaK.